The primary structure comprises 491 residues: Sterol 14-alpha demethylase (491 aa).

A helical transmembrane segment spans residues 20 to 40 (LWMLSTVALLSILVVSVVINV). Heme is bound at residue cysteine 430.

The protein belongs to the cytochrome P450 family. Heme is required as a cofactor.

It is found in the endoplasmic reticulum membrane. It carries out the reaction a 14alpha-methyl steroid + 3 reduced [NADPH--hemoprotein reductase] + 3 O2 = a Delta(14) steroid + formate + 3 oxidized [NADPH--hemoprotein reductase] + 4 H2O + 4 H(+). It catalyses the reaction a 14alpha-methyl steroid + reduced [NADPH--hemoprotein reductase] + O2 = a 14alpha-hydroxymethyl steroid + oxidized [NADPH--hemoprotein reductase] + H2O + H(+). The enzyme catalyses a 14alpha-hydroxymethyl steroid + reduced [NADPH--hemoprotein reductase] + O2 = a 14alpha-formyl steroid + oxidized [NADPH--hemoprotein reductase] + 2 H2O + H(+). The catalysed reaction is a 14alpha-formyl steroid + reduced [NADPH--hemoprotein reductase] + O2 = a Delta(14) steroid + formate + oxidized [NADPH--hemoprotein reductase] + H2O + 2 H(+). It carries out the reaction lanosterol + 3 reduced [NADPH--hemoprotein reductase] + 3 O2 = 4,4-dimethyl-5alpha-cholesta-8,14,24-trien-3beta-ol + formate + 3 oxidized [NADPH--hemoprotein reductase] + 4 H2O + 4 H(+). It catalyses the reaction lanosterol + reduced [NADPH--hemoprotein reductase] + O2 = 32-hydroxylanosterol + oxidized [NADPH--hemoprotein reductase] + H2O + H(+). The enzyme catalyses 32-hydroxylanosterol + reduced [NADPH--hemoprotein reductase] + O2 = 32-oxolanosterol + oxidized [NADPH--hemoprotein reductase] + 2 H2O + H(+). The catalysed reaction is 32-oxolanosterol + reduced [NADPH--hemoprotein reductase] + O2 = 4,4-dimethyl-5alpha-cholesta-8,14,24-trien-3beta-ol + formate + oxidized [NADPH--hemoprotein reductase] + H2O + 2 H(+). It carries out the reaction eburicol + 3 reduced [NADPH--hemoprotein reductase] + 3 O2 = 14-demethyleburicol + formate + 3 oxidized [NADPH--hemoprotein reductase] + 4 H2O + 4 H(+). It catalyses the reaction eburicol + reduced [NADPH--hemoprotein reductase] + O2 = 32-hydroxyeburicol + oxidized [NADPH--hemoprotein reductase] + H2O + H(+). The enzyme catalyses 32-hydroxyeburicol + reduced [NADPH--hemoprotein reductase] + O2 = 32-oxoeburicol + oxidized [NADPH--hemoprotein reductase] + 2 H2O + H(+). The catalysed reaction is 32-oxoeburicol + reduced [NADPH--hemoprotein reductase] + O2 = 14-demethyleburicol + formate + oxidized [NADPH--hemoprotein reductase] + H2O + 2 H(+). It functions in the pathway steroid biosynthesis; sterol biosynthesis. Functionally, sterol 14alpha-demethylase, encoded by cyp51A, cyp51B and cyp51C, that plays a critical role in the third module of ergosterol biosynthesis pathway, being ergosterol the major sterol component in fungal membranes that participates in a variety of functions. The third module or late pathway involves the ergosterol synthesis itself through consecutive reactions that mainly occur in the endoplasmic reticulum (ER) membrane. In filamentous fungi, during the initial step of this module, lanosterol (lanosta-8,24-dien-3beta-ol) can be metabolized to eburicol. Sterol 14alpha-demethylase catalyzes the three-step oxidative removal of the 14alpha-methyl group (C-32) of both these sterols in the form of formate, and converts eburicol and lanosterol to 14-demethyleburicol (4,4,24-trimethylergosta-8,14,24(28)-trienol) and 4,4-dimethyl-5alpha-cholesta-8,14,24-trien-3beta-ol, respectively, which are further metabolized by other enzymes in the pathway to ergosterol. Can also use substrates not intrinsic to fungi, such as 24,25-dihydrolanosterol (DHL), producing 4,4'-dimethyl-8,14-cholestadien-3-beta-ol, but at lower rates than the endogenous substrates. In terms of biological role, as a target of azole drugs, plays a crucial role in azole susceptibility. This Aspergillus flavus (strain ATCC 200026 / FGSC A1120 / IAM 13836 / NRRL 3357 / JCM 12722 / SRRC 167) protein is Sterol 14-alpha demethylase.